The chain runs to 83 residues: High-potential iron-sulfur protein (83 aa).

Residues Cys43, Cys46, Cys61, and Cys75 each coordinate [4Fe-4S] cluster.

The protein belongs to the high-potential iron-sulfur protein (HiPIP) family. As to quaternary structure, homodimer.

Specific class of high-redox-potential 4Fe-4S ferredoxins. Functions in anaerobic electron transport in most purple and in some other photosynthetic bacteria and in at least one genus (Paracoccus) of halophilic, denitrifying bacteria. This Thermochromatium tepidum (Chromatium tepidum) protein is High-potential iron-sulfur protein (hip).